Consider the following 194-residue polypeptide: uncharacterized protein (194 aa).

This sequence to A.aeolicus AQ_423.

This is an uncharacterized protein from Aquifex aeolicus (strain VF5).